A 493-amino-acid chain; its full sequence is Probable phospho-2-dehydro-3-deoxyheptonate aldolase, chloroplastic (493 aa).

The N-terminal 58 residues, 1-58 (MAMSNTSALASKLLPSCKPHQPTLTFFSPSTTCQKKPRSSRPISAAVHVTQPPKTPIS), are a transit peptide targeting the chloroplast.

The protein belongs to the class-II DAHP synthase family.

It is found in the plastid. The protein resides in the chloroplast. It carries out the reaction D-erythrose 4-phosphate + phosphoenolpyruvate + H2O = 7-phospho-2-dehydro-3-deoxy-D-arabino-heptonate + phosphate. It participates in metabolic intermediate biosynthesis; chorismate biosynthesis; chorismate from D-erythrose 4-phosphate and phosphoenolpyruvate: step 1/7. This is Probable phospho-2-dehydro-3-deoxyheptonate aldolase, chloroplastic (DHS1) from Catharanthus roseus (Madagascar periwinkle).